A 1583-amino-acid polypeptide reads, in one-letter code: Protein mesh (1583 aa).

Residues 1 to 21 (MGVKIKLVLAVVLILSANVLG) form the signal peptide. The Extracellular portion of the chain corresponds to 22–1182 (QDEIVNDTES…EFSQRALFLT (1161 aa)). An NIDO domain is found at 260-415 (GIYFRLDRDL…GRHIFRIDEN (156 aa)). An AMOP domain is found at 647–798 (GQRWSNSMCN…VGCETFRFER (152 aa)). In terms of domain architecture, VWFD spans 811-1019 (GVAGIFGDPH…HWQLTDREQR (209 aa)). The Sushi domain occupies 1110–1170 (ISCGILETPR…PDYGYTECLR (61 aa)). Disulfide bonds link C1112–C1152 and C1138–C1168. A helical transmembrane segment spans residues 1183–1203 (WGVIVAVILPLGLLICLLWFW). The Cytoplasmic segment spans residues 1204-1472 (CWHKPRSEGK…QEYSSRTLGA (269 aa)). The span at 1232 to 1250 (LRSSSMGNITDTMKSSTIP) shows a compositional bias: polar residues. The interval 1232–1448 (LRSSSMGNIT…IPEAPKSAPV (217 aa)) is disordered. Over residues 1291 to 1300 (GKSDSGKSDK) the composition is skewed to basic and acidic residues. Residues 1405–1416 (PIPSQYSPTYSE) show a composition bias toward polar residues. A helical membrane pass occupies residues 1473-1493 (TWGIISAVMLPIIIILICVAW). Residues 1494–1583 (RILQRRKAEE…RQWGGETEIN (90 aa)) lie on the Extracellular side of the membrane. Positions 1521–1539 (DSVKVTSDDESIPYKKDVT) are enriched in basic and acidic residues. The interval 1521–1583 (DSVKVTSDDE…RQWGGETEIN (63 aa)) is disordered.

In fifth instar larvae, expressed in midgut epithelial cells (at protein level).

Its subcellular location is the membrane. The protein resides in the cell junction. It is found in the septate junction. It localises to the lateral cell membrane. Functionally, may be required for the proper organization of smooth septate junctions and for the barrier function of the midgut epithelium. This Bombyx mori (Silk moth) protein is Protein mesh.